The sequence spans 315 residues: Protein ORANGE-LIKE, chloroplastic (315 aa).

Residues 1–16 (MTCFSSATPHRHHLLL) constitute a chloroplast transit peptide. The next 2 membrane-spanning stretches (helical) occupy residues 155 to 175 (LYST…LIAP) and 207 to 227 (IVAS…LIEV). The CR-type zinc finger occupies 225–307 (IEVNNVKQQE…CTGMVTASEH (83 aa)). Residues 238–245 (CKYCLGTG) form a CXXCXGXG motif repeat. A CXXCXXXG motif repeat occupies 249-256 (CARCSASG). The stretch at 282 to 289 (CLNCSGAG) is one CXXCXGXG motif repeat. The stretch at 293 to 300 (CPTCLCTG) is one CXXCXXXG motif repeat.

The protein belongs to the orange-like family. In terms of assembly, interacts with PSY1.

It localises to the plastid. It is found in the chloroplast membrane. Its function is as follows. May be associated with accumulation of carotenoids in chromoplasts. This is Protein ORANGE-LIKE, chloroplastic (ORLIKE) from Arabidopsis thaliana (Mouse-ear cress).